The sequence spans 1389 residues: DNA-directed RNA polymerase subunit beta'' (1389 aa).

Zn(2+) is bound by residues C224, C295, C302, and C305.

This sequence belongs to the RNA polymerase beta' chain family. RpoC2 subfamily. As to quaternary structure, in plastids the minimal PEP RNA polymerase catalytic core is composed of four subunits: alpha, beta, beta', and beta''. When a (nuclear-encoded) sigma factor is associated with the core the holoenzyme is formed, which can initiate transcription. Zn(2+) serves as cofactor.

Its subcellular location is the plastid. The protein localises to the chloroplast. The catalysed reaction is RNA(n) + a ribonucleoside 5'-triphosphate = RNA(n+1) + diphosphate. Functionally, DNA-dependent RNA polymerase catalyzes the transcription of DNA into RNA using the four ribonucleoside triphosphates as substrates. In Morus indica (Mulberry), this protein is DNA-directed RNA polymerase subunit beta''.